The chain runs to 274 residues: uncharacterized protein (274 aa).

It belongs to the type II cytokine receptor family.

This is an uncharacterized protein from Sus scrofa (Pig).